Consider the following 196-residue polypeptide: Crossover junction endodeoxyribonuclease RuvC (196 aa).

Catalysis depends on residues Asp-23, Glu-83, and His-156. Positions 23, 83, and 156 each coordinate Mg(2+).

Belongs to the RuvC family. As to quaternary structure, homodimer which binds Holliday junction (HJ) DNA. The HJ becomes 2-fold symmetrical on binding to RuvC with unstacked arms; it has a different conformation from HJ DNA in complex with RuvA. In the full resolvosome a probable DNA-RuvA(4)-RuvB(12)-RuvC(2) complex forms which resolves the HJ. Mg(2+) is required as a cofactor.

Its subcellular location is the cytoplasm. It carries out the reaction Endonucleolytic cleavage at a junction such as a reciprocal single-stranded crossover between two homologous DNA duplexes (Holliday junction).. The RuvA-RuvB-RuvC complex processes Holliday junction (HJ) DNA during genetic recombination and DNA repair. Endonuclease that resolves HJ intermediates. Cleaves cruciform DNA by making single-stranded nicks across the HJ at symmetrical positions within the homologous arms, yielding a 5'-phosphate and a 3'-hydroxyl group; requires a central core of homology in the junction. The consensus cleavage sequence is 5'-(A/T)TT(C/G)-3'. Cleavage occurs on the 3'-side of the TT dinucleotide at the point of strand exchange. HJ branch migration catalyzed by RuvA-RuvB allows RuvC to scan DNA until it finds its consensus sequence, where it cleaves and resolves the cruciform DNA. The sequence is that of Crossover junction endodeoxyribonuclease RuvC from Treponema pallidum (strain Nichols).